The following is a 2774-amino-acid chain: Microtubule-associated protein 1A (2774 aa).

Residues S114, S117, S118, S121, and S155 each carry the phosphoserine modification. Y177 is modified (phosphotyrosine). The tract at residues P310–T329 is disordered. Residues S319 and S322 each carry the phosphoserine modification. Residues K336–E338 form repeat 1. The interval K336–E541 is 11 X 3 AA repeats of K-K-[DE]. The span at E342–A390 shows a compositional bias: basic and acidic residues. Disordered regions lie at residues E342 to S718, T737 to T808, E845 to E939, F957 to C1078, E1093 to E1344, Q1357 to Q1646, E1693 to Q1725, L1739 to S1843, and A1861 to G2644. At S384 the chain carries Phosphoserine. Basic residues predominate over residues E391–K406. 2 stretches are compositionally biased toward basic and acidic residues: residues E407–L464 and V484–S500. 9 repeat units span residues K415 to D417, K420 to E422, K424 to E426, R427 to E429, K431 to E433, R436 to E438, K440 to D442, K444 to D446, and R449 to D451. T504 carries the phosphothreonine modification. The segment covering P506–A516 has biased composition (low complexity). S526 and S527 each carry phosphoserine. Composition is skewed to basic and acidic residues over residues E536–L554 and E584–V595. Residues K539 to E541 form repeat 11. 2 positions are modified to phosphoserine: S604 and S611. Composition is skewed to basic and acidic residues over residues E614–E631 and A638–A675. Position 643 is a phosphoserine (S643). Phosphothreonine is present on T663. Phosphoserine is present on residues S666, S677, S690, and S785. 2 stretches are compositionally biased toward polar residues: residues E845–E858 and T869–T881. 4 positions are modified to phosphoserine: S872, S875, S876, and S889. T892 is subject to Phosphothreonine. S894, S898, S907, S980, S990, S998, S1007, S1013, S1022, S1029, S1037, S1061, S1132, S1134, S1148, S1160, S1178, S1188, S1191, S1197, S1206, and S1209 each carry phosphoserine. Residues P1008 to H1028 show a composition bias toward basic and acidic residues. Residues S1142–T1157 are compositionally biased toward polar residues. Positions E1180–E1190 are enriched in polar residues. Positions L1198–T1212 are enriched in polar residues. Over residues L1220–C1236 the composition is skewed to basic and acidic residues. Phosphoserine is present on residues S1252, S1280, S1301, S1304, and S1307. Over residues T1293 to P1308 the composition is skewed to low complexity. 5 stretches are compositionally biased toward basic and acidic residues: residues W1317–Q1336, Q1357–G1409, A1416–D1428, E1436–I1479, and R1487–S1574. 4 positions are modified to phosphoserine: S1504, S1568, S1574, and S1594. Residues S1599–D1613 show a composition bias toward basic and acidic residues. Phosphoserine is present on residues S1622, S1643, S1715, S1742, S1757, S1763, and S1767. Positions T1707–T1718 are enriched in polar residues. T1772 carries the post-translational modification Phosphothreonine. Residues S1778 and S1784 each carry the phosphoserine modification. Positions T1789–S1803 are enriched in polar residues. Over residues L1818 to P1839 the composition is skewed to pro residues. The segment covering K1873–E1885 has biased composition (basic and acidic residues). Phosphoserine is present on S1897. Basic and acidic residues predominate over residues A1908–S1930. T1923 is modified (phosphothreonine). The segment covering S1984 to P1997 has biased composition (polar residues). A Phosphoserine modification is found at S1988. Over residues A2008–A2034 the composition is skewed to pro residues. Residue T2026 is modified to Phosphothreonine. Phosphoserine occurs at positions 2043 and 2077. A compositionally biased stretch (basic and acidic residues) spans P2055–R2092. Residues S2115 to S2125 show a composition bias toward low complexity. Positions P2144–A2153 are enriched in pro residues. S2204, S2221, S2225, S2228, S2229, and S2260 each carry phosphoserine. The segment covering E2226–I2237 has biased composition (polar residues). The segment covering D2271–P2287 has biased composition (low complexity). Residues A2288 to G2298 are compositionally biased toward pro residues. Positions L2299 to P2309 are enriched in low complexity. Residues A2352–E2364 show a composition bias toward basic and acidic residues. The residue at position 2424 (S2424) is a Phosphoserine. Low complexity predominate over residues S2477–D2489. Positions D2534–P2550 are enriched in pro residues. Over residues G2565–R2575 the composition is skewed to basic and acidic residues. Low complexity predominate over residues R2613–S2623. Phosphoserine is present on residues S2620 and S2635.

The protein belongs to the MAP1 family. 3 different light chains, LC1 (a cleavage product of MAP1B), LC2 (a cleavage product of MAP1A) and LC3 (produced by one of the MAP1LC3 genes), can associate with the MAP1A or MAP1B heavy chains. Interacts with guanylate kinase-like domain of DLG1, DLG2 and DLG4. Binds to CSNK1D. Interacts with TIAM2. As to quaternary structure, interacts with ELAVL4. In terms of processing, phosphorylated by CSNK1D. LC2 is generated from MAP1A by proteolytic processing. It is free to associate with both MAP1A and MAP1B. In terms of tissue distribution, brain, heart and muscle.

It is found in the cytoplasm. The protein resides in the cytoskeleton. Functionally, structural protein involved in the filamentous cross-bridging between microtubules and other skeletal elements. The polypeptide is Microtubule-associated protein 1A (Map1a) (Rattus norvegicus (Rat)).